Consider the following 426-residue polypeptide: Tyrosine--tRNA ligase (426 aa).

Tyrosine 37 is a binding site for L-tyrosine. The short motif at proline 42 to histidine 51 is the 'HIGH' region element. Residues tyrosine 175 and glutamine 179 each contribute to the L-tyrosine site. The 'KMSKS' region signature appears at lysine 235–threonine 239. Position 238 (lysine 238) interacts with ATP. The 59-residue stretch at threonine 357–lysine 415 folds into the S4 RNA-binding domain.

This sequence belongs to the class-I aminoacyl-tRNA synthetase family. TyrS type 1 subfamily. As to quaternary structure, homodimer.

It localises to the cytoplasm. It carries out the reaction tRNA(Tyr) + L-tyrosine + ATP = L-tyrosyl-tRNA(Tyr) + AMP + diphosphate + H(+). In terms of biological role, catalyzes the attachment of tyrosine to tRNA(Tyr) in a two-step reaction: tyrosine is first activated by ATP to form Tyr-AMP and then transferred to the acceptor end of tRNA(Tyr). The chain is Tyrosine--tRNA ligase from Klebsiella pneumoniae (strain 342).